We begin with the raw amino-acid sequence, 503 residues long: Lysine--tRNA ligase (503 aa).

Glu414 and Glu421 together coordinate Mg(2+).

It belongs to the class-II aminoacyl-tRNA synthetase family. As to quaternary structure, homodimer. Mg(2+) is required as a cofactor.

The protein resides in the cytoplasm. The enzyme catalyses tRNA(Lys) + L-lysine + ATP = L-lysyl-tRNA(Lys) + AMP + diphosphate. In Neisseria gonorrhoeae (strain ATCC 700825 / FA 1090), this protein is Lysine--tRNA ligase.